We begin with the raw amino-acid sequence, 223 residues long: Phosphoribosylformylglycinamidine synthase subunit PurQ (223 aa).

The region spanning 3–223 (FAVLVFPGSN…MVKSWREQNV (221 aa)) is the Glutamine amidotransferase type-1 domain. Cys85 acts as the Nucleophile in catalysis. Catalysis depends on residues His193 and Glu195.

In terms of assembly, part of the FGAM synthase complex composed of 1 PurL, 1 PurQ and 2 PurS subunits.

Its subcellular location is the cytoplasm. It carries out the reaction N(2)-formyl-N(1)-(5-phospho-beta-D-ribosyl)glycinamide + L-glutamine + ATP + H2O = 2-formamido-N(1)-(5-O-phospho-beta-D-ribosyl)acetamidine + L-glutamate + ADP + phosphate + H(+). The enzyme catalyses L-glutamine + H2O = L-glutamate + NH4(+). It participates in purine metabolism; IMP biosynthesis via de novo pathway; 5-amino-1-(5-phospho-D-ribosyl)imidazole from N(2)-formyl-N(1)-(5-phospho-D-ribosyl)glycinamide: step 1/2. Its function is as follows. Part of the phosphoribosylformylglycinamidine synthase complex involved in the purines biosynthetic pathway. Catalyzes the ATP-dependent conversion of formylglycinamide ribonucleotide (FGAR) and glutamine to yield formylglycinamidine ribonucleotide (FGAM) and glutamate. The FGAM synthase complex is composed of three subunits. PurQ produces an ammonia molecule by converting glutamine to glutamate. PurL transfers the ammonia molecule to FGAR to form FGAM in an ATP-dependent manner. PurS interacts with PurQ and PurL and is thought to assist in the transfer of the ammonia molecule from PurQ to PurL. This chain is Phosphoribosylformylglycinamidine synthase subunit PurQ, found in Staphylococcus epidermidis (strain ATCC 35984 / DSM 28319 / BCRC 17069 / CCUG 31568 / BM 3577 / RP62A).